The sequence spans 429 residues: 3-phosphoshikimate 1-carboxyvinyltransferase (429 aa).

3-phosphoshikimate is bound by residues lysine 20, serine 21, and arginine 25. Phosphoenolpyruvate is bound at residue lysine 20. 2 residues coordinate phosphoenolpyruvate: glycine 89 and arginine 118. 6 residues coordinate 3-phosphoshikimate: serine 164, serine 165, glutamine 166, serine 192, aspartate 311, and lysine 338. Glutamine 166 is a binding site for phosphoenolpyruvate. Aspartate 311 functions as the Proton acceptor in the catalytic mechanism. Phosphoenolpyruvate-binding residues include arginine 342 and arginine 384.

The protein belongs to the EPSP synthase family. In terms of assembly, monomer.

Its subcellular location is the cytoplasm. It catalyses the reaction 3-phosphoshikimate + phosphoenolpyruvate = 5-O-(1-carboxyvinyl)-3-phosphoshikimate + phosphate. It participates in metabolic intermediate biosynthesis; chorismate biosynthesis. Its function is as follows. Catalyzes the transfer of the enolpyruvyl moiety of phosphoenolpyruvate (PEP) to the 5-hydroxyl of shikimate-3-phosphate (S3P) to produce enolpyruvyl shikimate-3-phosphate and inorganic phosphate. This is 3-phosphoshikimate 1-carboxyvinyltransferase from Methanococcus maripaludis (strain C6 / ATCC BAA-1332).